The following is a 348-amino-acid chain: MKKTDELRTIRIDPLITPAELARQYAITSDIMDTVIATRQNIARIMTGQDARLLVVIGPCSVHDPIAAVEYAHRLYELRVKYKDRLEIIMRTYFEKPRTVVGWKGLISDPDLNGSFRVNHGLAVARKLLLDINALGMPAATEFLDIVIGQFIADLISWGAIGARTTESQIHREMASALSCPVGFKNGTDGNIRIAIDAIRAAKVRHLFFAPNKDGQMTINHTSGNPYGHIIMRGGRAPNYHPDDINSAVKHLREFDLLEHLMIDFSHGNCLKEHLRQKNVSKSVSYQISHGSKAIFGVMIESFLEEGFQTVTNNQPLIYGKSITDACLNWKDSVLIIEQLADAVDARF.

This sequence belongs to the class-I DAHP synthase family.

The enzyme catalyses D-erythrose 4-phosphate + phosphoenolpyruvate + H2O = 7-phospho-2-dehydro-3-deoxy-D-arabino-heptonate + phosphate. The protein operates within metabolic intermediate biosynthesis; chorismate biosynthesis; chorismate from D-erythrose 4-phosphate and phosphoenolpyruvate: step 1/7. Functionally, stereospecific condensation of phosphoenolpyruvate (PEP) and D-erythrose-4-phosphate (E4P) giving rise to 3-deoxy-D-arabino-heptulosonate-7-phosphate (DAHP). The sequence is that of Phospho-2-dehydro-3-deoxyheptonate aldolase, Trp-sensitive (aroH) from Buchnera aphidicola subsp. Acyrthosiphon pisum (strain APS) (Acyrthosiphon pisum symbiotic bacterium).